A 339-amino-acid chain; its full sequence is Anthranilate phosphoribosyltransferase (339 aa).

5-phospho-alpha-D-ribose 1-diphosphate is bound by residues Gly82, Gly85–Asp86, Asn92–Thr95, Lys110–Ser118, and Ser122. Gly82 contributes to the anthranilate binding site. Ser94 serves as a coordination point for Mg(2+). An anthranilate-binding site is contributed by Asn113. Residue Arg168 participates in anthranilate binding. Mg(2+) is bound by residues Asp227 and Glu228.

It belongs to the anthranilate phosphoribosyltransferase family. In terms of assembly, homodimer. Requires Mg(2+) as cofactor.

The enzyme catalyses N-(5-phospho-beta-D-ribosyl)anthranilate + diphosphate = 5-phospho-alpha-D-ribose 1-diphosphate + anthranilate. Its pathway is amino-acid biosynthesis; L-tryptophan biosynthesis; L-tryptophan from chorismate: step 2/5. Its function is as follows. Catalyzes the transfer of the phosphoribosyl group of 5-phosphorylribose-1-pyrophosphate (PRPP) to anthranilate to yield N-(5'-phosphoribosyl)-anthranilate (PRA). This is Anthranilate phosphoribosyltransferase from Ruthia magnifica subsp. Calyptogena magnifica.